Reading from the N-terminus, the 190-residue chain is Elongation factor P 2 (190 aa).

Belongs to the elongation factor P family.

Its subcellular location is the cytoplasm. It participates in protein biosynthesis; polypeptide chain elongation. Involved in peptide bond synthesis. Stimulates efficient translation and peptide-bond synthesis on native or reconstituted 70S ribosomes in vitro. Probably functions indirectly by altering the affinity of the ribosome for aminoacyl-tRNA, thus increasing their reactivity as acceptors for peptidyl transferase. The chain is Elongation factor P 2 (efp2) from Protochlamydia amoebophila (strain UWE25).